Reading from the N-terminus, the 367-residue chain is Serine/threonine-protein kinase Sgk2 (367 aa).

The interval 1-26 (MNSSPAGTPSPQPSRANGNINLGPSA) is disordered. Serine 10 carries the phosphoserine modification. The Protein kinase domain maps to 35 to 292 (FDFLKVIGKG…FLEIKNHVFF (258 aa)). ATP is bound by residues 41–49 (IGKGNYGKV) and lysine 64. Positions 68–78 (KKSILKKKEQS) match the Nuclear localization signal motif. Aspartate 159 serves as the catalytic Proton acceptor. Residue threonine 193 is modified to Phosphothreonine; by PDPK1. The 75-residue stretch at 293 to 367 (SPINWDDLYH…APEDDDILDC (75 aa)) folds into the AGC-kinase C-terminal domain. Residues serine 334 and serine 356 each carry the phosphoserine modification. Tyrosine 357 bears the Phosphotyrosine mark.

This sequence belongs to the protein kinase superfamily. AGC Ser/Thr protein kinase family. Activated by phosphorylation on Ser-356 by an unknown kinase (may be mTORC2 but not confirmed), transforming it into a substrate for PDPK1 which then phosphorylates it on Thr-193. In terms of tissue distribution, highly expressed in liver, kidney and pancreas, and at lower levels in brain.

It is found in the cytoplasm. Its subcellular location is the nucleus. The enzyme catalyses L-seryl-[protein] + ATP = O-phospho-L-seryl-[protein] + ADP + H(+). The catalysed reaction is L-threonyl-[protein] + ATP = O-phospho-L-threonyl-[protein] + ADP + H(+). Two specific sites, one in the kinase domain (Thr-193) and the other in the C-terminal regulatory region (Ser-356), need to be phosphorylated for its full activation. Functionally, serine/threonine-protein kinase which is involved in the regulation of a wide variety of ion channels, membrane transporters, cell growth, survival and proliferation. Up-regulates Na(+) channels: SCNN1A/ENAC, K(+) channels: KCNA3/Kv1.3, KCNE1 and KCNQ1, amino acid transporter: SLC6A19, glutamate transporter: SLC1A6/EAAT4, glutamate receptors: GRIA1/GLUR1 and GRIK2/GLUR6, Na(+)/H(+) exchanger: SLC9A3/NHE3, and the Na(+)/K(+) ATPase. The polypeptide is Serine/threonine-protein kinase Sgk2 (SGK2) (Homo sapiens (Human)).